Here is a 432-residue protein sequence, read N- to C-terminus: Adenylosuccinate synthetase (432 aa).

GTP-binding positions include 12 to 18 (GDEGKGK) and 40 to 42 (GHT). Asp-13 (proton acceptor) is an active-site residue. Residues Asp-13 and Gly-40 each contribute to the Mg(2+) site. Residues 13–16 (DEGK), 38–41 (NAGH), Thr-129, Arg-143, Gln-224, Thr-239, and Arg-303 each bind IMP. The active-site Proton donor is the His-41. 299-305 (VTTGRRR) provides a ligand contact to substrate. GTP-binding positions include Arg-305, 331–333 (KLD), and 413–415 (GVG).

Belongs to the adenylosuccinate synthetase family. In terms of assembly, homodimer. Mg(2+) is required as a cofactor.

It is found in the cytoplasm. It carries out the reaction IMP + L-aspartate + GTP = N(6)-(1,2-dicarboxyethyl)-AMP + GDP + phosphate + 2 H(+). It participates in purine metabolism; AMP biosynthesis via de novo pathway; AMP from IMP: step 1/2. In terms of biological role, plays an important role in the de novo pathway of purine nucleotide biosynthesis. Catalyzes the first committed step in the biosynthesis of AMP from IMP. The polypeptide is Adenylosuccinate synthetase (Mycobacterium marinum (strain ATCC BAA-535 / M)).